The sequence spans 87 residues: Acylphosphatase (87 aa).

An Acylphosphatase-like domain is found at 1-87 (MAWVHGRVQG…EDYQDFRIRY (87 aa)). Residues arginine 14 and asparagine 32 contribute to the active site.

This sequence belongs to the acylphosphatase family.

It catalyses the reaction an acyl phosphate + H2O = a carboxylate + phosphate + H(+). The polypeptide is Acylphosphatase (acyP) (Cronobacter sakazakii (strain ATCC BAA-894) (Enterobacter sakazakii)).